Reading from the N-terminus, the 138-residue chain is MNTIHVDVVSAEESIFSGEARFVALPGESGELGIFPRHTPLITRIKPGSVRIEMADGSEEFVFVAGGILEVQPNCVTVLSDTAIRGADLDAEKAEKAKLEAEEALKNAKSEVDLARAQSELAVMAAQIAALRKFRQKR.

The protein belongs to the ATPase epsilon chain family. In terms of assembly, F-type ATPases have 2 components, CF(1) - the catalytic core - and CF(0) - the membrane proton channel. CF(1) has five subunits: alpha(3), beta(3), gamma(1), delta(1), epsilon(1). CF(0) has three main subunits: a, b and c.

Its subcellular location is the cell inner membrane. Its function is as follows. Produces ATP from ADP in the presence of a proton gradient across the membrane. The polypeptide is ATP synthase epsilon chain (Delftia acidovorans (strain DSM 14801 / SPH-1)).